The following is a 198-amino-acid chain: Nucleoid occlusion factor SlmA (198 aa).

Residues 10 to 70 (NRREEILQSL…SLIEFIEDSL (61 aa)) enclose the HTH tetR-type domain. A DNA-binding region (H-T-H motif) is located at residues 33-52 (TTAKLAASVGVSEAALYRHF). Residues 119–144 (DRLQGRINQLFERIEVQLRQVMREKK) are a coiled coil.

This sequence belongs to the nucleoid occlusion factor SlmA family. Homodimer. Interacts with FtsZ.

Its subcellular location is the cytoplasm. It localises to the nucleoid. Required for nucleoid occlusion (NO) phenomenon, which prevents Z-ring formation and cell division over the nucleoid. Acts as a DNA-associated cell division inhibitor that binds simultaneously chromosomal DNA and FtsZ, and disrupts the assembly of FtsZ polymers. SlmA-DNA-binding sequences (SBS) are dispersed on non-Ter regions of the chromosome, preventing FtsZ polymerization at these regions. This chain is Nucleoid occlusion factor SlmA, found in Klebsiella pneumoniae (strain 342).